The primary structure comprises 169 residues: Putative pre-16S rRNA nuclease (169 aa).

A compositionally biased stretch (basic and acidic residues) spans 1–19 (MTDSDHRLPDRPGEGDPGR). The segment at 1 to 22 (MTDSDHRLPDRPGEGDPGRGRR) is disordered.

It belongs to the YqgF nuclease family.

It localises to the cytoplasm. In terms of biological role, could be a nuclease involved in processing of the 5'-end of pre-16S rRNA. The sequence is that of Putative pre-16S rRNA nuclease from Mycobacterium sp. (strain JLS).